Here is a 26-residue protein sequence, read N- to C-terminus: CLSPGSSCSPTSYNCCRSCNPYSRKC.

Intrachain disulfides connect Cys-1/Cys-16, Cys-8/Cys-19, and Cys-15/Cys-26. Residues Pro-4, Pro-10, and Pro-21 each carry the 4-hydroxyproline modification.

It belongs to the conotoxin O1 superfamily. Expressed by the venom duct.

Its subcellular location is the secreted. Its function is as follows. Omega-conotoxins act at presynaptic membranes, they bind and block voltage-gated calcium channels (Cav). This Conus tulipa (Fish-hunting cone snail) protein is Omega-conotoxin TVIA.